A 300-amino-acid chain; its full sequence is tRNA pseudouridine synthase B (300 aa).

Asp-47 acts as the Nucleophile in catalysis.

Belongs to the pseudouridine synthase TruB family. Type 1 subfamily.

The enzyme catalyses uridine(55) in tRNA = pseudouridine(55) in tRNA. Responsible for synthesis of pseudouridine from uracil-55 in the psi GC loop of transfer RNAs. The polypeptide is tRNA pseudouridine synthase B (Azoarcus sp. (strain BH72)).